The primary structure comprises 423 residues: Lipase member M (423 aa).

An N-terminal signal peptide occupies residues 1-33; it reads MLETLSRQWIVSHRMEMWLLILVAYMFQRNVNS. Asparagine 48 is a glycosylation site (N-linked (GlcNAc...) asparagine). The AB hydrolase-1 domain maps to 92 to 392; it reads PVVLLQHGLV…EWAHVDFIWG (301 aa). The active-site Nucleophile is serine 186. Residues cysteine 260 and cysteine 269 are joined by a disulfide bond. Catalysis depends on charge relay system residues aspartate 357 and histidine 386.

This sequence belongs to the AB hydrolase superfamily. Lipase family. As to expression, exclusively expressed in the epidermis within the granular keratinocytes.

It is found in the secreted. Plays a highly specific role in the last step of keratinocyte differentiation. May have an essential function in lipid metabolism of the most differentiated epidermal layers. This is Lipase member M (LIPM) from Homo sapiens (Human).